The following is a 261-amino-acid chain: Phosphoinositide-3-kinase-interacting protein 1 (261 aa).

A signal peptide spans 1-21 (MLLAWVRTILVSNMLLAEAYG). The Extracellular segment spans residues 22-166 (SGGCFWDNGH…NSKEKKDLGT (145 aa)). One can recognise a Kringle domain in the interval 24–101 (GCFWDNGHLY…EKRPCQDLRC (78 aa)). Disulfide bonds link C25–C101, C46–C82, and C70–C96. The segment covering 90–101 (APEKRPCQDLRC) has biased composition (basic and acidic residues). Positions 90–122 (APEKRPCQDLRCPDTTSQGLPTSATETEEAAEV) are disordered. Residues 167–187 (LGYVLGITMMVIIVVIGAGIV) form a helical membrane-spanning segment. Residues 188-261 (LGYTYKRGKD…LMGQAGTPGA (74 aa)) are Cytoplasmic-facing.

It is found in the cell membrane. Functionally, negative regulator of hepatic phosphatidylinositol 3-kinase (PI3K) activity. This is Phosphoinositide-3-kinase-interacting protein 1 (PIK3IP1) from Bos taurus (Bovine).